The chain runs to 133 residues: Putative N-acetylgalactosamine permease IIC component 2 (133 aa).

The Cytoplasmic portion of the chain corresponds to 1–2 (ME). A PTS EIIC type-4 domain is found at 1–133 (MEISLLQAFA…CDLATNPRRI (133 aa)). Residues 3–23 (ISLLQAFALGIIAFIAGLDMF) form a helical membrane-spanning segment. Residues 24–32 (NGLTHMHRP) are Periplasmic-facing. The chain crosses the membrane as a helical span at residues 33–53 (VVLGPLVGLVLGDLHTGILTG). Residues 54–65 (GTLELVWMGLAP) are Cytoplasmic-facing. A helical membrane pass occupies residues 66–86 (LAGAQPPNVIIGTIVGTAFAI). The Periplasmic portion of the chain corresponds to 87–93 (TTGVKPD). Residues 94 to 114 (VAVGVAVPFAVAVQMGITFLF) form a helical membrane-spanning segment. Topologically, residues 115 to 133 (SVMSGVMSRCDLATNPRRI) are cytoplasmic.

The protein resides in the cell inner membrane. Its function is as follows. The phosphoenolpyruvate-dependent sugar phosphotransferase system (PTS), a major carbohydrate active -transport system, catalyzes the phosphorylation of incoming sugar substrates concomitant with their translocation across the cell membrane. This system is involved in N-acetylgalactosamine transport. The chain is Putative N-acetylgalactosamine permease IIC component 2 (agaW) from Escherichia coli (strain K12).